Here is a 268-residue protein sequence, read N- to C-terminus: Undecaprenyl-diphosphatase (268 aa).

Transmembrane regions (helical) follow at residues 11 to 33, 46 to 66, 84 to 104, 107 to 127, 144 to 164, 185 to 205, 213 to 233, and 246 to 266; these read FLGLIEGLTEFIPVSSTGHLLLI, FEVLIQLGAILAILSVYSAKL, LGVLVAFLPAAVIGALAHGFI, VLFETPMLVCIMLIVGGFILL, YPLPICLAIGFIQCLAMIPGV, AEFSFFLAMPTMAGAFAYDLF, FNDGALIVVGFIMAFISGVFV, and FALFGWWRLIVGSAGMAALII.

This sequence belongs to the UppP family.

It localises to the cell inner membrane. The catalysed reaction is di-trans,octa-cis-undecaprenyl diphosphate + H2O = di-trans,octa-cis-undecaprenyl phosphate + phosphate + H(+). Functionally, catalyzes the dephosphorylation of undecaprenyl diphosphate (UPP). Confers resistance to bacitracin. This chain is Undecaprenyl-diphosphatase, found in Brucella suis (strain ATCC 23445 / NCTC 10510).